Reading from the N-terminus, the 291-residue chain is GTPase Era (291 aa).

An Era-type G domain is found at 2 to 167; it reads KSGFVSIIGR…LDEIVKYLDE (166 aa). Positions 10–17 are G1; the sequence is GRTNAGKS. 10-17 contacts GTP; that stretch reads GRTNAGKS. Residues 36–40 form a G2 region; that stretch reads NATRR. Residues 57 to 60 are G3; it reads DTPG. GTP is bound by residues 57–61 and 116–119; these read DTPGL and NKVD. A G4 region spans residues 116-119; it reads NKVD. The G5 stretch occupies residues 146–148; the sequence is YSS. The region spanning 186–274 is the KH type-2 domain; that stretch reads YRDFILESIY…LLKLFVTVKK (89 aa).

Belongs to the TRAFAC class TrmE-Era-EngA-EngB-Septin-like GTPase superfamily. Era GTPase family. Monomer.

Its subcellular location is the cytoplasm. It localises to the cell inner membrane. In terms of biological role, an essential GTPase that binds both GDP and GTP, with rapid nucleotide exchange. Plays a role in 16S rRNA processing and 30S ribosomal subunit biogenesis and possibly also in cell cycle regulation and energy metabolism. This Campylobacter jejuni (strain RM1221) protein is GTPase Era.